The sequence spans 296 residues: 4-hydroxy-tetrahydrodipicolinate synthase (296 aa).

Thr-49 is a binding site for pyruvate. The Proton donor/acceptor role is filled by Tyr-137. Catalysis depends on Lys-165, which acts as the Schiff-base intermediate with substrate. Val-207 lines the pyruvate pocket.

Belongs to the DapA family. Homotetramer; dimer of dimers.

Its subcellular location is the cytoplasm. The catalysed reaction is L-aspartate 4-semialdehyde + pyruvate = (2S,4S)-4-hydroxy-2,3,4,5-tetrahydrodipicolinate + H2O + H(+). The protein operates within amino-acid biosynthesis; L-lysine biosynthesis via DAP pathway; (S)-tetrahydrodipicolinate from L-aspartate: step 3/4. Its function is as follows. Catalyzes the condensation of (S)-aspartate-beta-semialdehyde [(S)-ASA] and pyruvate to 4-hydroxy-tetrahydrodipicolinate (HTPA). The protein is 4-hydroxy-tetrahydrodipicolinate synthase of Nitrobacter hamburgensis (strain DSM 10229 / NCIMB 13809 / X14).